The following is a 561-amino-acid chain: Mesoderm induction early response protein 2 (561 aa).

Disordered regions lie at residues 1–28 (MAEA…GEPN) and 52–188 (QNYG…EDPL). Serine 11 is modified (phosphoserine). Residues 140–165 (QSSADDLTPSVTSHEASDLFPSQSGS) are compositionally biased toward polar residues. One can recognise an ELM2 domain in the interval 195 to 292 (KEIMVGPQFQ…EALRRLRFNV (98 aa)). The 53-residue stretch at 297–349 (DGLCAWSEEERRNFEHGFRVHGKNFHLIQANKVRTRSVGECVEYYYLWKKSER) folds into the SANT domain. Residues 360–515 (GRRKYGPSGN…DGEPEETVGP (156 aa)) are disordered. The span at 417–428 (LSMGSSMSRSLG) shows a compositional bias: low complexity. Positions 439-451 (SSEPGPRLFPPLD) are enriched in pro residues. A compositionally biased stretch (low complexity) spans 453-482 (PSALPSSRRPPALAEPAFFPPATAAPEPGA).

As to quaternary structure, part of a complex containing at least CDYL, MIER1, MIER2, HDAC1 and HDAC2.

The protein localises to the nucleus. Its function is as follows. Transcriptional repressor. In Bos taurus (Bovine), this protein is Mesoderm induction early response protein 2 (MIER2).